The sequence spans 2176 residues: Protein sidekick-2 (2176 aa).

An N-terminal signal peptide occupies residues 1 to 24 (MFSSMWRLPLWTLLALHRIHSAGA). At 25–1936 (QDDVPPYFKT…ASPFYEEWWF (1912 aa)) the chain is on the extracellular side. 6 Ig-like C2-type domains span residues 30-112 (PYFK…TEVQ), 117-204 (GSFE…QPIT), 219-298 (PTII…SSVA), 312-402 (PQFV…LAVT), 406-495 (PNIT…ADLV), and 500-589 (TRIT…AHLR). The cysteines at positions 52 and 95 are disulfide-linked. Asparagine 197 carries N-linked (GlcNAc...) asparagine glycosylation. Cystine bridges form between cysteine 241/cysteine 288, cysteine 334/cysteine 384, cysteine 427/cysteine 479, and cysteine 521/cysteine 573. 13 Fibronectin type-III domains span residues 596–692 (APEH…LPEE), 697–793 (PPQN…TLQG), 798–897 (PPGN…THED), 901–995 (PVGH…VPPE), 999–1098 (APTN…TLQA), 1103–1201 (APAN…TRES), 1206–1303 (GPTN…TLDD), 1307–1401 (PPMG…TEKR), 1406–1503 (PPSK…TLQA), 1508–1625 (APTI…VGEA), 1630–1726 (APQN…TQQA), 1730–1825 (APGS…TGPG), and 1828–1930 (APGP…ASPF). Asparagine 747 carries an N-linked (GlcNAc...) asparagine glycan. N-linked (GlcNAc...) asparagine glycosylation is found at asparagine 940 and asparagine 952. Asparagine 1106 carries N-linked (GlcNAc...) asparagine glycosylation. A glycan (N-linked (GlcNAc...) asparagine) is linked at asparagine 1592. The tract at residues 1712 to 1734 (DGPRSTPTRGQTQQAAPSAPGSV) is disordered. A compositionally biased stretch (polar residues) spans 1716 to 1727 (STPTRGQTQQAA). Residues 1937-1957 (LVVIALVGLIFILLLVFVLII) traverse the membrane as a helical segment. The Cytoplasmic portion of the chain corresponds to 1958–2176 (RGQSKKYSKK…APIAGFSSFV (219 aa)). 3 disordered regions span residues 2013–2032 (GLYT…YSDE), 2043–2070 (AESS…VDTN), and 2102–2176 (QAYS…SSFV). Composition is skewed to polar residues over residues 2044–2070 (ESSS…VDTN) and 2119–2129 (VPNSNSTQQGS). Positions 2170–2176 (AGFSSFV) match the PDZ-binding motif.

It belongs to the sidekick family. In terms of assembly, homodimer; mediates homophilic interactions to promote cell adhesion. Interacts (via PDZ-binding motif) with MAGI1, MAGI2, DLG2, DLG3 and DLG4. In terms of tissue distribution, expressed in retinal ganglion cells (RGCs) that form synapses in distinct inner plexiform layer (IPL) sublaminae. Specifically expressed in specific subsets of retinal ganglion cells (RGCs), named W3B-RGCs, that specifically respond when the timing of the movement of a small object differs from that of the background, but not when they coincide (at protein level). Also present in excitatory amacrine cell type called VG3-ACs, that provide strong and selective input W3B-RGCs (at protein level). Expressed at low levels in the glomeruli.

It is found in the cell membrane. Its subcellular location is the synapse. Functionally, adhesion molecule that promotes lamina-specific synaptic connections in the retina and is specifically required for the formation of neuronal circuits that detect motion. Acts by promoting formation of synapses between two specific retinal cell types: the retinal ganglion cells W3B-RGCs and the excitatory amacrine cells VG3-ACs. Formation of synapses between these two cells plays a key role in detection of motion. Promotes synaptic connectivity via homophilic interactions. The chain is Protein sidekick-2 from Mus musculus (Mouse).